We begin with the raw amino-acid sequence, 134 residues long: Phosphoribosyl-AMP cyclohydrolase (134 aa).

Position 80 (D80) interacts with Mg(2+). C81 contacts Zn(2+). Mg(2+)-binding residues include D82 and D84. Zn(2+) contacts are provided by C98 and C105.

Belongs to the PRA-CH family. As to quaternary structure, homodimer. Mg(2+) is required as a cofactor. Requires Zn(2+) as cofactor.

It is found in the cytoplasm. It carries out the reaction 1-(5-phospho-beta-D-ribosyl)-5'-AMP + H2O = 1-(5-phospho-beta-D-ribosyl)-5-[(5-phospho-beta-D-ribosylamino)methylideneamino]imidazole-4-carboxamide. The protein operates within amino-acid biosynthesis; L-histidine biosynthesis; L-histidine from 5-phospho-alpha-D-ribose 1-diphosphate: step 3/9. In terms of biological role, catalyzes the hydrolysis of the adenine ring of phosphoribosyl-AMP. The protein is Phosphoribosyl-AMP cyclohydrolase of Herminiimonas arsenicoxydans.